We begin with the raw amino-acid sequence, 250 residues long: Homeobox protein Dlx4a (250 aa).

The segment at residues 123–182 (IRKPRTIYSSLQLQALNQRFQQTQYLALPERADLAAKLGLTQTQVKIWFQNKRSKYKKIM) is a DNA-binding region (homeobox). The tract at residues 182-202 (MKHGSSGPEGEHLQAASASGA) is disordered.

This sequence belongs to the distal-less homeobox family.

The protein localises to the nucleus. In Danio rerio (Zebrafish), this protein is Homeobox protein Dlx4a (dlx4a).